A 164-amino-acid polypeptide reads, in one-letter code: Lipoprotein signal peptidase (164 aa).

4 consecutive transmembrane segments (helical) span residues 2–22, 40–60, 70–90, and 99–119; these read MSLL…AIVL, VVIT…AFSF, WLFS…MAKA, and LAYS…VVYG. Active-site residues include Asp123 and Asp142. Residues 138 to 158 form a helical membrane-spanning segment; sequence FNVADMAISCGAVFIILDGFI.

This sequence belongs to the peptidase A8 family.

It localises to the cell inner membrane. It carries out the reaction Release of signal peptides from bacterial membrane prolipoproteins. Hydrolyzes -Xaa-Yaa-Zaa-|-(S,diacylglyceryl)Cys-, in which Xaa is hydrophobic (preferably Leu), and Yaa (Ala or Ser) and Zaa (Gly or Ala) have small, neutral side chains.. Its pathway is protein modification; lipoprotein biosynthesis (signal peptide cleavage). This protein specifically catalyzes the removal of signal peptides from prolipoproteins. The polypeptide is Lipoprotein signal peptidase (Tolumonas auensis (strain DSM 9187 / NBRC 110442 / TA 4)).